Reading from the N-terminus, the 132-residue chain is Small ribosomal subunit protein bS6 (132 aa).

A disordered region spans residues 94-132 (DAVTEESQLAKNADEKRARKATTRRPDRDDSDDNDHSED). Positions 122–132 (DDSDDNDHSED) are enriched in acidic residues.

The protein belongs to the bacterial ribosomal protein bS6 family.

Its function is as follows. Binds together with bS18 to 16S ribosomal RNA. The protein is Small ribosomal subunit protein bS6 of Psychrobacter arcticus (strain DSM 17307 / VKM B-2377 / 273-4).